The primary structure comprises 2197 residues: Activating signal cointegrator 1 complex subunit 3 (2197 aa).

At serine 12 the chain carries Phosphoserine. Coiled-coil stretches lie at residues 18–80 (KQDN…AKQI) and 328–356 (IQSE…KAGE). Positions 487–670 (DTAYNTNENM…FLHVNPYIGL (184 aa)) constitute a Helicase ATP-binding 1 domain. 500-507 (APTGAGKT) contributes to the ATP binding site. Lysine 573 carries the N6-acetyllysine modification. Positions 612–615 (DEVH) match the DEVH box motif. The Helicase C-terminal 1 domain occupies 697–915 (QLNNMDEVCY…GTVTNVEEAV (219 aa)). Positions 979–1288 (STDLGRTASH…GAEAVCIINF (310 aa)) constitute an SEC63 1 domain. Residues 1337 to 1512 (HTLYHTDCNV…WLNIKQMGLF (176 aa)) enclose the Helicase ATP-binding 2 domain. An ATP-binding site is contributed by 1350–1357 (APTGSGKT). The short motif at 1454–1457 (DEIH) is the DEIH box element. The Helicase C-terminal 2 domain occupies 1565–1739 (RMLSSMTKLE…VLSDHLNAEI (175 aa)). Positions 1812–2175 (PLTCGRIASY…YLGLDQQYDI (364 aa)) constitute an SEC63 2 domain.

The protein belongs to the helicase family. In terms of assembly, identified in the ASCC complex that contains ASCC1, ASCC2 and ASCC3. Functions as a scaffolding subunit that interacts directly with both ASCC1 and ASCC2. Interacts directly with ALKBH3, and thereby recruits ALKBH3 to the ASCC complex. Part of the ASC-1/TRIP4 complex, that contains TRIP4, ASCC1, ASCC2 and ASCC3. Part of the RQT (ribosome quality control trigger) complex, that contains ASCC2, ASCC3 and TRIP4. Associates with ribosomes; recruited to collided ribosomes. Interacts with ZCCHC4. Interacts with ZNF598. Interacts with RPS3.

It localises to the nucleus. It is found in the nucleus speckle. The protein resides in the cytoplasm. The protein localises to the cytosol. It catalyses the reaction Couples ATP hydrolysis with the unwinding of duplex DNA by translocating in the 3'-5' direction.. The enzyme catalyses ATP + H2O = ADP + phosphate + H(+). In terms of biological role, ATPase involved both in DNA repair and rescue of stalled ribosomes. 3'-5' DNA helicase involved in repair of alkylated DNA: promotes DNA unwinding to generate single-stranded substrate needed for ALKBH3, enabling ALKBH3 to process alkylated N3-methylcytosine (3mC) within double-stranded regions. Also involved in activation of the ribosome quality control (RQC) pathway, a pathway that degrades nascent peptide chains during problematic translation. Drives the splitting of stalled ribosomes that are ubiquitinated in a ZNF598-dependent manner, as part of the ribosome quality control trigger (RQT) complex. Part of the ASC-1 complex that enhances NF-kappa-B, SRF and AP1 transactivation. This Rattus norvegicus (Rat) protein is Activating signal cointegrator 1 complex subunit 3 (Ascc3).